A 175-amino-acid polypeptide reads, in one-letter code: MILVLLLILIAFLYIYFPSSLNQKNQELSTLSKNLINNYSFVPKTFKQKIHIIIPLKSNVDNIIHNILKQTEKVDIMTIIVPKEYENKLKNGKNSLCKLLRDTCIIQISGGYGMLSKERETGTILVYVNNLFSDPNTLKNMLNRISKSTKKIFYFSDATVIDNSIPIGIDDAYKL.

A signal peptide spans M1–Q23.

This is an uncharacterized protein from Invertebrate iridescent virus 6 (IIV-6).